Consider the following 126-residue polypeptide: Gas vesicle protein J (126 aa).

Belongs to the gas vesicle GvpA family. Interacts with GvpA.

The protein localises to the gas vesicle. A minor component of the gas vesicle, might be involved in nucleating gas vesicle formation. Gas vesicles (GV) are hollow, gas filled proteinaceous nanostructures. During planktonic growth they allow positioning of the organism at a favorable depth for light or nutrient acquisition. This is Gas vesicle protein J from Pseudanabaena galeata (strain PCC 6901).